Reading from the N-terminus, the 417-residue chain is NADH-quinone oxidoreductase subunit D (417 aa).

This sequence belongs to the complex I 49 kDa subunit family. As to quaternary structure, NDH-1 is composed of 14 different subunits. Subunits NuoB, C, D, E, F, and G constitute the peripheral sector of the complex.

The protein localises to the cell inner membrane. It carries out the reaction a quinone + NADH + 5 H(+)(in) = a quinol + NAD(+) + 4 H(+)(out). NDH-1 shuttles electrons from NADH, via FMN and iron-sulfur (Fe-S) centers, to quinones in the respiratory chain. The immediate electron acceptor for the enzyme in this species is believed to be ubiquinone. Couples the redox reaction to proton translocation (for every two electrons transferred, four hydrogen ions are translocated across the cytoplasmic membrane), and thus conserves the redox energy in a proton gradient. The protein is NADH-quinone oxidoreductase subunit D of Janthinobacterium sp. (strain Marseille) (Minibacterium massiliensis).